Here is a 1321-residue protein sequence, read N- to C-terminus: Bile salt export pump (1321 aa).

At 1 to 62 the chain is on the cytoplasmic side; it reads MSDSVILRSV…FSSSKDNWLM (62 aa). The region spanning 62 to 385 is the ABC transmembrane type-1 1 domain; sequence MFMGSVCALL…ASSCLEIFST (324 aa). Residues 63 to 83 form a helical membrane-spanning segment; it reads FMGSVCALLHGMAQPGMIIVF. Topologically, residues 84-147 are extracellular; the sequence is GILTDIFVEY…VIKFSGIYAG (64 aa). 4 N-linked (GlcNAc...) asparagine glycosylation sites follow: Asn-109, Asn-116, Asn-122, and Asn-125. A helical transmembrane segment spans residues 148–168; it reads VGVAVLILGYFQIRLWVITGA. At 169-215 the chain is on the cytoplasmic side; that stretch reads RQIRKMRKFYFRRIMRMEIGWFDCTSVGELNSRFSDDINKIDEAIAD. A helical membrane pass occupies residues 216–236; sequence QMALFLQRLSTALSGLLLGFY. The Extracellular portion of the chain corresponds to 237–240; the sequence is RGWK. Residues 241–261 form a helical membrane-spanning segment; sequence LTLVILAVSPLIGIGAAVIGL. At 262 to 319 the chain is on the cytoplasmic side; that stretch reads SVAKFTELELKAYAKAGSIADEVLSSIRTVAAFGGENKEVERYEKNLMFAQRWGIWKG. Residues 320–340 form a helical membrane-spanning segment; that stretch reads MVMGFFTGYMWCLIFFCYALA. Over 341 to 353 the chain is Extracellular; that stretch reads FWYGSRLVLDEGE. A helical transmembrane segment spans residues 354-374; it reads YTPGTLIQIFLCVIIAAMNIG. At 375–755 the chain is on the cytoplasmic side; sequence NASSCLEIFS…KYNISEWPYI (381 aa). The region spanning 420–656 is the ABC transporter 1 domain; it reads IEFHNVTFHY…KGVYFMLVTL (237 aa). 455 to 462 is a binding site for ATP; sequence GSSGAGKS. Position 586 is a phosphothreonine (Thr-586). Position 587 is a phosphoserine (Ser-587). Residues 651 to 674 form an interaction with HAX1 region; that stretch reads FMLVTLQSQEDNTHKETGIKGKDT. A compositionally biased stretch (basic and acidic residues) spans 662-684; that stretch reads NTHKETGIKGKDTTEGDTPERTF. The segment at 662-722 is disordered; that stretch reads NTHKETGIKG…PLAIGDHKSS (61 aa). Residues Ser-692, Ser-703, and Ser-706 each carry the phosphoserine modification. In terms of domain architecture, ABC transmembrane type-1 2 spans 755–1043; sequence ILVGALCAAI…TFSYTPSYAK (289 aa). Residues 756-776 traverse the membrane as a helical segment; that stretch reads LVGALCAAINGAVTPIYSLLF. Over 777–794 the chain is Extracellular; it reads SQILKTFSLVDKEQQRSE. The helical transmembrane segment at 795–815 threads the bilayer; sequence IYSMCLFFVILGCVSLFTQFL. Residues 816 to 869 are Cytoplasmic-facing; that stretch reads QGYNFAKSGELLTKRLRKFGFKAMLRQDIGWFDDLKNNPGVLTTRLATDASQVQ. A run of 2 helical transmembrane segments spans residues 870–890 and 891–911; these read GATGSQVGMMVNSFTNIFVAV and LIAFLFNWKLSLVISVFFPFL. The Cytoplasmic segment spans residues 912–979; sequence ALSGAVQTKM…SYKTAIRKAN (68 aa). A helical transmembrane segment spans residues 980–1000; it reads VYGLCYAFSQGISFLANSAAY. At 1001–1011 the chain is on the extracellular side; the sequence is RYGGYLIVYED. Residues 1012–1032 form a helical membrane-spanning segment; the sequence is LNFSYVFRVVSSIAMSATAVG. Topologically, residues 1033-1321 are cytoplasmic; sequence RTFSYTPSYA…KLVITGAPIS (289 aa). An ABC transporter 2 domain is found at 1078-1316; sequence IDFIDCKFTY…KGAYYKLVIT (239 aa). Position 1113-1120 (1113-1120) interacts with ATP; that stretch reads GSSGCGKS. Ser-1321 is subject to Phosphoserine.

It belongs to the ABC transporter superfamily. ABCB family. Multidrug resistance exporter (TC 3.A.1.201) subfamily. As to quaternary structure, interacts with HAX1. Interacts with the adapter protein complex 2 (AP-2) throught AP2A2 or AP2A1; this interaction regulates cell membrane expression of ABCB11 through its internalization in a clathrin-dependent manner and its subsequent degradation. In terms of processing, N-glycosylated. Post-translationally, ubiquitinated; short-chain ubiquitination regulates cell-Surface expression of ABCB11. Expressed predominantly, if not exclusively in the liver, where it was further localized to the canalicular microvilli and to subcanalicular vesicles of the hepatocytes by in situ.

The protein localises to the apical cell membrane. The protein resides in the recycling endosome membrane. Its subcellular location is the endosome. It localises to the cell membrane. The catalysed reaction is cholate(in) + ATP + H2O = cholate(out) + ADP + phosphate + H(+). The enzyme catalyses taurocholate(in) + ATP + H2O = taurocholate(out) + ADP + phosphate + H(+). It carries out the reaction glycocholate(in) + ATP + H2O = glycocholate(out) + ADP + phosphate + H(+). It catalyses the reaction glycochenodeoxycholate(in) + ATP + H2O = glycochenodeoxycholate(out) + ADP + phosphate + H(+). The catalysed reaction is taurochenodeoxycholate(in) + ATP + H2O = taurochenodeoxycholate(out) + ADP + phosphate + H(+). The enzyme catalyses glycoursodeoxycholate(in) + ATP + H2O = glycoursodeoxycholate(out) + ADP + phosphate + H(+). It carries out the reaction tauroursodeoxycholate(in) + ATP + H2O = tauroursodeoxycholate(out) + ADP + phosphate + H(+). It catalyses the reaction taurodeoxycholate(in) + ATP + H2O = taurodeoxycholate(out) + ADP + phosphate + H(+). The catalysed reaction is taurolithocholate 3-sulfate(in) + ATP + H2O = taurolithocholate 3-sulfate(out) + ADP + phosphate + H(+). The enzyme catalyses pravastatin(in) + ATP + H2O = pravastatin(out) + ADP + phosphate + H(+). The uptake of taurocholate is inhibited by taurolithocholate sulfate with an IC(50) of 9 uM. Pravastatin competitively inhibits the transport of taurocholic acid. Cyclosporin A, glibenclamide, rifampicin and troglitazonestrongly competitively inhibit the transport activity of taurocholate. The canalicular transport activity of taurocholate is strongly dependent on canalicular membrane cholesterol content. The uptake of taurocholate is increased by short- and medium-chain fatty acids. Cholesterol increases transport capacity of taurocholate without affecting the affinity for the substrate. Catalyzes the transport of the major hydrophobic bile salts, such as taurine and glycine-conjugated cholic acid across the canalicular membrane of hepatocytes in an ATP-dependent manner, therefore participates in hepatic bile acid homeostasis and consequently to lipid homeostasis through regulation of biliary lipid secretion in a bile salts dependent manner. Transports taurine-conjugated bile salts more rapidly than glycine-conjugated bile salts. Also transports non-bile acid compounds, such as pravastatin and fexofenadine in an ATP-dependent manner and may be involved in their biliary excretion. The sequence is that of Bile salt export pump from Mus musculus (Mouse).